The primary structure comprises 168 residues: Disulfide bond formation protein B 1 (168 aa).

Residues 1 to 14 (MNEQTSRLNRERRF) lie on the Cytoplasmic side of the membrane. A helical membrane pass occupies residues 15-31 (LVLLGLICLSLIGGALY). At 32–49 (MQVVLGEAPCPLCILQRY) the chain is on the periplasmic side. A disulfide bond links cysteine 41 and cysteine 44. A helical transmembrane segment spans residues 50–65 (ALLFIAVFAFIAAAMP). Residues 66–72 (GRRSLTF) lie on the Cytoplasmic side of the membrane. The helical transmembrane segment at 73–89 (FEALVVLSAIGGIVAAG) threads the bilayer. At 90–144 (NHVYILANPMVSCGIDTLQPIVDDLPLAKLWPLAFQVDGFCSTPYPPILGLSLAQ) the chain is on the periplasmic side. A disulfide bond links cysteine 102 and cysteine 130. Residues 145–163 (WALVAFVLTAVLVPLGIYR) traverse the membrane as a helical segment. The Cytoplasmic segment spans residues 164-168 (NRRQA).

It belongs to the DsbB family.

It localises to the cell inner membrane. In terms of biological role, required for disulfide bond formation in some periplasmic proteins. Acts by oxidizing the DsbA protein. The polypeptide is Disulfide bond formation protein B 1 (dsbB1) (Pseudomonas putida (strain ATCC 47054 / DSM 6125 / CFBP 8728 / NCIMB 11950 / KT2440)).